The following is a 364-amino-acid chain: Alanine racemase (364 aa).

Residue Lys-35 is the Proton acceptor; specific for D-alanine of the active site. At Lys-35 the chain carries N6-(pyridoxal phosphate)lysine. Arg-132 is a substrate binding site. Tyr-260 acts as the Proton acceptor; specific for L-alanine in catalysis. Met-308 lines the substrate pocket.

It belongs to the alanine racemase family. Requires pyridoxal 5'-phosphate as cofactor.

The catalysed reaction is L-alanine = D-alanine. Its pathway is amino-acid biosynthesis; D-alanine biosynthesis; D-alanine from L-alanine: step 1/1. Catalyzes the interconversion of L-alanine and D-alanine. May also act on other amino acids. This Acidithiobacillus ferrooxidans (strain ATCC 23270 / DSM 14882 / CIP 104768 / NCIMB 8455) (Ferrobacillus ferrooxidans (strain ATCC 23270)) protein is Alanine racemase (alr).